The chain runs to 380 residues: F-box protein At4g18380 (380 aa).

One can recognise an F-box domain in the interval 22–70 (IDHFDNLPDSILLLIFNNIGDVKALGRCSVVSKRFHSLIPQVENVFVRV).

The protein is F-box protein At4g18380 of Arabidopsis thaliana (Mouse-ear cress).